The primary structure comprises 200 residues: Urease accessory protein UreG (200 aa).

Residue 11–18 (GPVGSGKT) coordinates GTP.

This sequence belongs to the SIMIBI class G3E GTPase family. UreG subfamily. Homodimer. UreD, UreF and UreG form a complex that acts as a GTP-hydrolysis-dependent molecular chaperone, activating the urease apoprotein by helping to assemble the nickel containing metallocenter of UreC. The UreE protein probably delivers the nickel.

It localises to the cytoplasm. Facilitates the functional incorporation of the urease nickel metallocenter. This process requires GTP hydrolysis, probably effectuated by UreG. This is Urease accessory protein UreG from Thermosynechococcus vestitus (strain NIES-2133 / IAM M-273 / BP-1).